The chain runs to 693 residues: Auxin response factor 10 (693 aa).

The TF-B3 DNA-binding region spans 115-217; it reads FAKTLTQSDA…DLCVGIRRAK (103 aa). In terms of domain architecture, PB1 spans 580-668; sequence TGHCKVFMES…DIGGDNVRKT (89 aa).

This sequence belongs to the ARF family. In terms of assembly, homodimers and heterodimers. In terms of tissue distribution, expressed in the whole plant.

The protein localises to the nucleus. Functionally, auxin response factors (ARFs) are transcriptional factors that bind specifically to the DNA sequence 5'-TGTCTC-3' found in the auxin-responsive promoter elements (AuxREs). Could act as transcriptional activator or repressor. Formation of heterodimers with Aux/IAA proteins may alter their ability to modulate early auxin response genes expression. The polypeptide is Auxin response factor 10 (ARF10) (Arabidopsis thaliana (Mouse-ear cress)).